The following is a 269-amino-acid chain: Shikimate dehydrogenase (NADP(+)) (269 aa).

Shikimate-binding positions include 14 to 16 and T60; that span reads TLS. The active-site Proton acceptor is K64. Residue D76 coordinates NADP(+). Shikimate is bound by residues N85 and D100. Residues 122 to 126 and M208 contribute to the NADP(+) site; that span reads GAGGA. Y210 serves as a coordination point for shikimate. G232 serves as a coordination point for NADP(+).

This sequence belongs to the shikimate dehydrogenase family. Homodimer.

The enzyme catalyses shikimate + NADP(+) = 3-dehydroshikimate + NADPH + H(+). Its pathway is metabolic intermediate biosynthesis; chorismate biosynthesis; chorismate from D-erythrose 4-phosphate and phosphoenolpyruvate: step 4/7. Functionally, involved in the biosynthesis of the chorismate, which leads to the biosynthesis of aromatic amino acids. Catalyzes the reversible NADPH linked reduction of 3-dehydroshikimate (DHSA) to yield shikimate (SA). This chain is Shikimate dehydrogenase (NADP(+)), found in Caldivirga maquilingensis (strain ATCC 700844 / DSM 13496 / JCM 10307 / IC-167).